A 389-amino-acid chain; its full sequence is GTPase Obg (389 aa).

One can recognise an Obg domain in the interval 1–159; sequence MKFVDEAVIK…RELRLELLLL (159 aa). The OBG-type G domain maps to 160 to 333; that stretch reads ADVGLLGMPN…LAEKLFDFIK (174 aa). GTP contacts are provided by residues 166–173, 191–195, 213–216, 283–286, and 314–316; these read GMPNAGKS, FTTLV, DIPG, NKTD, and SAA. S173 and T193 together coordinate Mg(2+).

Belongs to the TRAFAC class OBG-HflX-like GTPase superfamily. OBG GTPase family. Monomer. The cofactor is Mg(2+).

It localises to the cytoplasm. In terms of biological role, an essential GTPase which binds GTP, GDP and possibly (p)ppGpp with moderate affinity, with high nucleotide exchange rates and a fairly low GTP hydrolysis rate. Plays a role in control of the cell cycle, stress response, ribosome biogenesis and in those bacteria that undergo differentiation, in morphogenesis control. The polypeptide is GTPase Obg (Shewanella amazonensis (strain ATCC BAA-1098 / SB2B)).